A 229-amino-acid polypeptide reads, in one-letter code: Transmembrane emp24 domain-containing protein 5 (229 aa).

Residues 1–27 (MGVRMWLPFPMLLLSALPATLLSGAAG) form the signal peptide. Topologically, residues 28-196 (FTPSLDSDFT…IQESNFDRVN (169 aa)) are lumenal. The GOLD domain maps to 45-126 (KECFYQPMPL…EKVIFFELIL (82 aa)). Residues 197 to 217 (FWSVVNLMVMVVVSAIQVYTL) form a helical membrane-spanning segment. Over 218–229 (KSLFEDKRKSRT) the chain is Cytoplasmic.

Belongs to the EMP24/GP25L family. As to quaternary structure, interacts with TMED9 and TMED10.

Its subcellular location is the endoplasmic reticulum membrane. It is found in the golgi apparatus. It localises to the cis-Golgi network membrane. The protein localises to the endoplasmic reticulum-Golgi intermediate compartment membrane. Its function is as follows. Potential role in vesicular protein trafficking, mainly in the early secretory pathway. Required for the maintenance of the Golgi apparatus; involved in protein exchange between Golgi stacks during assembly. Probably not required for COPI-vesicle-mediated retrograde transport. This is Transmembrane emp24 domain-containing protein 5 (Tmed5) from Rattus norvegicus (Rat).